A 376-amino-acid polypeptide reads, in one-letter code: Alanine racemase (376 aa).

K36 (proton acceptor; specific for D-alanine) is an active-site residue. Position 36 is an N6-(pyridoxal phosphate)lysine (K36). R134 contributes to the substrate binding site. Y266 acts as the Proton acceptor; specific for L-alanine in catalysis. A substrate-binding site is contributed by M314.

It belongs to the alanine racemase family. It depends on pyridoxal 5'-phosphate as a cofactor.

The enzyme catalyses L-alanine = D-alanine. The protein operates within amino-acid biosynthesis; D-alanine biosynthesis; D-alanine from L-alanine: step 1/1. Its function is as follows. Catalyzes the interconversion of L-alanine and D-alanine. May also act on other amino acids. This is Alanine racemase (alr) from Nitratidesulfovibrio vulgaris (strain ATCC 29579 / DSM 644 / CCUG 34227 / NCIMB 8303 / VKM B-1760 / Hildenborough) (Desulfovibrio vulgaris).